Reading from the N-terminus, the 386-residue chain is O-methyltransferase 12 (386 aa).

The S-adenosyl-L-homocysteine site is built by Ser-207, Gly-231, Asp-254, Asp-274, and Lys-288. Residue Asp-254 participates in S-adenosyl-L-methionine binding. The Proton acceptor role is filled by His-292.

Belongs to the class I-like SAM-binding methyltransferase superfamily. Cation-independent O-methyltransferase family. As to quaternary structure, homodimer. In terms of tissue distribution, expressed at high levels in all tissues.

It carries out the reaction 4-hydroxy-3,5-dimethoxyphenethylamine + S-adenosyl-L-methionine = mescaline + S-adenosyl-L-homocysteine + H(+). The catalysed reaction is dopamine + S-adenosyl-L-methionine = 4-methoxytyramine + S-adenosyl-L-homocysteine + H(+). It participates in aromatic compound metabolism. Its pathway is alkaloid biosynthesis. O-methyltransferase participating in the biosynthesis of natural products derived from phenylethylamine, including mescaline, a natural hallucinogen potentially used in psychotherapeutic treatments. Catalyzes the O-methylation of dopamine, 4-hydroxy-3,5-dimethoxyphenethylamine, 4,5-dihydroxy-3-methoxyphenethylamine and N-methyl-4,5-dihydroxy-3-methoxyphenethylamine. Also involved in the conversion of N-methyl-4-hydroxy-3,5-dimethoxyphenethylamine to N-methylmescaline. This is O-methyltransferase 12 from Lophophora williamsii (Peyote).